The following is a 94-amino-acid chain: Adaptation to cold protein J (94 aa).

The region spanning 3–93 (NHFSVLGIKP…AMRELWDQFY (91 aa)) is the J domain. Residues 74–94 (NNVIVTDPNSAMRELWDQFYP) are essential for interaction with AtcC.

In terms of assembly, interacts via its C-terminal extension with AtcC. Does not interact with AtcA and AtcB.

In terms of biological role, involved in cold adaptation. The J-domain is functional and can stimulate the ATPase activity of the DnaK chaperone. May work as a co-chaperone of the DnaK system to support cold resistance. The chain is Adaptation to cold protein J from Shewanella oneidensis (strain ATCC 700550 / JCM 31522 / CIP 106686 / LMG 19005 / NCIMB 14063 / MR-1).